A 295-amino-acid polypeptide reads, in one-letter code: tRNA(Ile)-lysidine synthase (295 aa).

10-15 (SGGPDS) lines the ATP pocket.

The protein belongs to the tRNA(Ile)-lysidine synthase family.

The protein resides in the cytoplasm. The catalysed reaction is cytidine(34) in tRNA(Ile2) + L-lysine + ATP = lysidine(34) in tRNA(Ile2) + AMP + diphosphate + H(+). Its function is as follows. Ligates lysine onto the cytidine present at position 34 of the AUA codon-specific tRNA(Ile) that contains the anticodon CAU, in an ATP-dependent manner. Cytidine is converted to lysidine, thus changing the amino acid specificity of the tRNA from methionine to isoleucine. The sequence is that of tRNA(Ile)-lysidine synthase from Malacoplasma penetrans (strain HF-2) (Mycoplasma penetrans).